Here is a 760-residue protein sequence, read N- to C-terminus: General transcription and DNA repair factor IIH helicase subunit XPD (760 aa).

The region spanning Gly7–Asp283 is the Helicase ATP-binding domain. Met42–Thr49 contributes to the ATP binding site. 4 residues coordinate [4Fe-4S] cluster: Cys116, Cys134, Cys155, and Cys190. The DEAH box signature appears at Asp234–His237. The segment at Met438 to Leu637 is mediates interaction with MMS19. Positions Lys682–Arg695 match the Nuclear localization signal motif.

This sequence belongs to the helicase family. RAD3/XPD subfamily. Component of the 7-subunit TFIIH core complex composed of XPB/ERCC3, XPD/ERCC2, GTF2H1, GTF2H2, GTF2H3, GTF2H4 and GTF2H5, which is active in NER. The core complex associates with the 3-subunit CDK-activating kinase (CAK) module composed of CCNH/cyclin H, CDK7 and MNAT1 to form the 10-subunit holoenzyme (holo-TFIIH) active in transcription. The interaction with GTF2H2 results in the stimulation of the 5'--&gt;3' helicase activity. Component of the MMXD complex, which includes CIAO1, ERCC2, CIAO2B, MMS19 and SLC25A5. Interacts with CIAO1 and CIAO2B; the interaction WITH CIAO2B is direct. Interacts with ATF7IP. Interacts directly with MMS19. Part of TBP-based Pol II pre-initiation complex (PIC), in which Pol II core assembles with general transcription factors and other specific initiation factors including GTF2E1, GTF2E2, GTF2F1, GTF2F2, TCEA1, ERCC2, ERCC3, GTF2H2, GTF2H3, GTF2H4, GTF2H5, GTF2A1, GTF2A2, GTF2B and TBP; this large multi-subunit PIC complex mediates DNA unwinding and targets Pol II core to the transcription start site where the first phosphodiester bond forms. Mg(2+) is required as a cofactor. [4Fe-4S] cluster serves as cofactor. Post-translationally, ISGylated.

The protein localises to the nucleus. Its subcellular location is the cytoplasm. The protein resides in the cytoskeleton. It localises to the spindle. The enzyme catalyses Couples ATP hydrolysis with the unwinding of duplex DNA at the replication fork by translocating in the 5'-3' direction. This creates two antiparallel DNA single strands (ssDNA). The leading ssDNA polymer is the template for DNA polymerase III holoenzyme which synthesizes a continuous strand.. It carries out the reaction ATP + H2O = ADP + phosphate + H(+). Its function is as follows. ATP-dependent 5'-3' DNA helicase. Component of the general transcription and DNA repair factor IIH (TFIIH) core complex which is involved in general and transcription-coupled nucleotide excision repair (NER) of damaged DNA. When complexed to CDK-activating kinase (CAK), involved in transcription by RNA polymerase II. In NER, TFIIH acts by opening DNA around the lesion to allow the excision of the damaged oligonucleotide and its replacement by a new DNA fragment. The ATP-dependent helicase activity of XPD/ERCC2 is required for DNA opening. In transcription, TFIIH has an essential role in transcription initiation. When the pre-initiation complex (PIC) has been established, TFIIH is required for promoter opening and promoter escape. Phosphorylation of the C-terminal tail (CTD) of the largest subunit of RNA polymerase II by the kinase module CAK controls the initiation of transcription. XPD/ERCC2 acts by forming a bridge between CAK and the core-TFIIH complex. Involved in the regulation of vitamin-D receptor activity. As part of the mitotic spindle-associated MMXD complex it plays a role in chromosome segregation. Might have a role in aging process and could play a causative role in the generation of skin cancers. This is General transcription and DNA repair factor IIH helicase subunit XPD from Cricetulus griseus (Chinese hamster).